Consider the following 1429-residue polypeptide: Alpha-agarase (1429 aa).

Residues 1 to 26 form the signal peptide; the sequence is MFKTKRSLLNSSIAISFAVLGVQAQA. CBM6 domains follow at residues 29–161 and 211–345; these read LELQ…FRLT and FVIQ…LTFT. Disordered stretches follow at residues 349 to 400 and 474 to 495; these read SDGG…DGVS and NTPA…GEPG. The span at 369-378 shows a compositional bias: polar residues; sequence SSDSCPNTPT. A PA14 domain is found at 490 to 638; the sequence is NGGEPGDSYY…GGTNFVHPSN (149 aa). Positions 662–793 constitute a CBM6 3 domain; sequence IYIQLEDFDE…QWSGDLVRLA (132 aa).

The protein belongs to the glycosyl hydrolase 96 family. As to quaternary structure, homodimer. The cofactor is Ca(2+).

The catalysed reaction is Endohydrolysis of 1,3-alpha-L-galactosidic linkages in agarose, yielding agarotetraose as the major product.. Its function is as follows. Alpha-agarase. Does not hydrolyze agarotetraose, agarohexaose, kappa-carrageenan, iota-carrageenan or lambda-carrageenan. The polypeptide is Alpha-agarase (Alteromonas agarilytica).